Reading from the N-terminus, the 327-residue chain is DNA-directed RNA polymerase subunit alpha (327 aa).

The tract at residues 1–233 (MVREKVKVST…NLFIPFLHVE (233 aa)) is alpha N-terminal domain (alpha-NTD). An alpha C-terminal domain (alpha-CTD) region spans residues 267 to 327 (LAFQYIFIDQ…KKILDILEKK (61 aa)).

Belongs to the RNA polymerase alpha chain family. In plastids the minimal PEP RNA polymerase catalytic core is composed of four subunits: alpha, beta, beta', and beta''. When a (nuclear-encoded) sigma factor is associated with the core the holoenzyme is formed, which can initiate transcription.

It is found in the plastid. The protein localises to the chloroplast. It carries out the reaction RNA(n) + a ribonucleoside 5'-triphosphate = RNA(n+1) + diphosphate. Its function is as follows. DNA-dependent RNA polymerase catalyzes the transcription of DNA into RNA using the four ribonucleoside triphosphates as substrates. The polypeptide is DNA-directed RNA polymerase subunit alpha (Lobularia maritima (Sweet alyssum)).